The following is a 437-amino-acid chain: Enolase (437 aa).

Residue Gln-162 participates in (2R)-2-phosphoglycerate binding. Glu-204 functions as the Proton donor in the catalytic mechanism. Mg(2+) is bound by residues Asp-251, Glu-297, and Asp-324. Lys-349, Arg-378, Ser-379, and Lys-400 together coordinate (2R)-2-phosphoglycerate. Lys-349 acts as the Proton acceptor in catalysis.

It belongs to the enolase family. The cofactor is Mg(2+).

It localises to the cytoplasm. The protein resides in the secreted. Its subcellular location is the cell surface. It carries out the reaction (2R)-2-phosphoglycerate = phosphoenolpyruvate + H2O. It functions in the pathway carbohydrate degradation; glycolysis; pyruvate from D-glyceraldehyde 3-phosphate: step 4/5. Catalyzes the reversible conversion of 2-phosphoglycerate (2-PG) into phosphoenolpyruvate (PEP). It is essential for the degradation of carbohydrates via glycolysis. The sequence is that of Enolase from Chlorobium limicola (strain DSM 245 / NBRC 103803 / 6330).